Reading from the N-terminus, the 810-residue chain is Bifunctional aspartokinase/homoserine dehydrogenase 2 (810 aa).

The aspartokinase stretch occupies residues 2 to 252; sequence SVIAQAGAKG…VKDACLLPLL (251 aa). An interface region spans residues 253 to 463; that stretch reads RLDEASELAR…RAEKRIGLVL (211 aa). The tract at residues 464-810 is homoserine dehydrogenase; the sequence is FGKGNIGSRW…SDINRLAQLL (347 aa). Positions 468 and 469 each coordinate NADP(+). The NAD(+) site is built by I469 and V498. I469 is an NADPH binding site. The NADP(+) site is built by R501, T549, and K573. Residue T549 participates in NAD(+) binding. NADPH is bound by residues T549 and K573. Na(+) contacts are provided by V603, A605, and L607. NADP(+) is bound by residues G658 and E661. The L-homoserine site is built by E661 and D672. K676 (proton donor) is an active-site residue. G791 serves as a coordination point for NADP(+). G791 serves as a coordination point for NAD(+). G791 serves as a coordination point for NADPH.

This sequence in the N-terminal section; belongs to the aspartokinase family. It in the C-terminal section; belongs to the homoserine dehydrogenase family. As to quaternary structure, homotetramer. A metal cation serves as cofactor.

The catalysed reaction is L-homoserine + NADP(+) = L-aspartate 4-semialdehyde + NADPH + H(+). It carries out the reaction L-homoserine + NAD(+) = L-aspartate 4-semialdehyde + NADH + H(+). It catalyses the reaction L-aspartate + ATP = 4-phospho-L-aspartate + ADP. The protein operates within amino-acid biosynthesis; L-lysine biosynthesis via DAP pathway; (S)-tetrahydrodipicolinate from L-aspartate: step 1/4. Its pathway is amino-acid biosynthesis; L-methionine biosynthesis via de novo pathway; L-homoserine from L-aspartate: step 1/3. It functions in the pathway amino-acid biosynthesis; L-methionine biosynthesis via de novo pathway; L-homoserine from L-aspartate: step 3/3. It participates in amino-acid biosynthesis; L-threonine biosynthesis; L-threonine from L-aspartate: step 1/5. The protein operates within amino-acid biosynthesis; L-threonine biosynthesis; L-threonine from L-aspartate: step 3/5. Bifunctional aspartate kinase and homoserine dehydrogenase that catalyzes the first and the third steps toward the synthesis of lysine, methionine and threonine from aspartate. The chain is Bifunctional aspartokinase/homoserine dehydrogenase 2 (metL) from Escherichia coli (strain K12).